A 283-amino-acid chain; its full sequence is Foldase protein PrsA 3 (283 aa).

A signal peptide spans 1–21 (MKKKKLFLGTIISCVVLALSA). Cys22 carries the N-palmitoyl cysteine lipid modification. Residue Cys22 is the site of S-diacylglycerol cysteine attachment. The PpiC domain maps to 132–222 (KPEMKVSHIL…YGYHIIKVTD (91 aa)).

This sequence belongs to the PrsA family.

It localises to the cell membrane. The catalysed reaction is [protein]-peptidylproline (omega=180) = [protein]-peptidylproline (omega=0). Its function is as follows. Plays a major role in protein secretion by helping the post-translocational extracellular folding of several secreted proteins. Important for the secretion of the protective antigen. The three PsrA proteins in this organism show different but overlapping substrate specificities. This Bacillus anthracis protein is Foldase protein PrsA 3 (prsA3).